We begin with the raw amino-acid sequence, 654 residues long: Endoplasmic reticulum chaperone BiP (654 aa).

Residues 1-18 form the signal peptide; sequence MKFTVVAAALLLLCAVRA. The tract at residues 1–80 is required for interaction with ELAPOR1; sequence MKFTVVAAAL…EGERLIGDAA (80 aa). 36–39 contacts ATP; that stretch reads GTTY. Ser86 is modified (phosphoserine). Lys96 contributes to the ATP binding site. Lys125 bears the N6-acetyllysine mark. The interval 125–280 is nucleotide-binding (NBD); the sequence is KPYIQVDIGG…KKKTGKDVRK (156 aa). 3'-nitrotyrosine is present on Tyr160. Residue Lys213 is modified to N6-acetyllysine. Residue 227-229 coordinates ATP; the sequence is GGT. Lys271 is modified (N6-acetyllysine). 293–300 lines the ATP pocket; the sequence is EKAKRALS. N6-acetyllysine is present on Lys326. Lys352 participates in a covalent cross-link: Glycyl lysine isopeptide (Lys-Gly) (interchain with G-Cter in SUMO2). Residue Lys353 is modified to N6-acetyllysine; alternate. Residue Lys353 forms a Glycyl lysine isopeptide (Lys-Gly) (interchain with G-Cter in SUMO1); alternate linkage. 364–367 contacts ATP; that stretch reads GSTR. Residues 409 to 419 are interdomain linker; that stretch reads QDTGDLVLLDV. Positions 420–500 are substrate-binding (SBD); sequence CPLTLGIETV…PRGVPQIEVT (81 aa). The residue at position 447 (Lys447) is an N6-succinyllysine. Residue Arg492 is modified to Omega-N-methylarginine. Thr518 carries the O-AMP-threonine; alternate modification. A Phosphothreonine; alternate modification is found at Thr518. Lys585 is subject to N6,N6,N6-trimethyllysine; by METTL21A; in vitro. An N6,N6-dimethyllysine; alternate modification is found at Lys585. The residue at position 585 (Lys585) is an N6-methyllysine; alternate. Lys591 carries the post-translational modification N6-methyllysine. Residues 631–654 are disordered; the sequence is ISKLYGSGGPPPTGEEDTSEKDEL. Thr643 and Thr648 each carry phosphothreonine. Residues 644–654 show a composition bias toward acidic residues; the sequence is GEEDTSEKDEL. Ser649 bears the Phosphoserine mark. The Prevents secretion from ER motif lies at 651-654; the sequence is KDEL.

It belongs to the heat shock protein 70 family. Monomer and homooligomer; homooligomerization via the interdomain linker inactivates the chaperone activity and acts as a storage of HSPA5/BiP molecules. Interacts with DNAJC1 (via J domain). Component of an EIF2 complex at least composed of CELF1/CUGBP1, CALR, CALR3, EIF2S1, EIF2S2, HSP90B1 and HSPA5. Part of a large chaperone multiprotein complex comprising DNAJB11, HSP90B1, HSPA5, HYOU, PDIA2, PDIA4, PDIA6, PPIB, SDF2L1, UGGT1 and very small amounts of ERP29, but not, or at very low levels, CALR nor CANX. Interacts with TMEM132A and TRIM21. May form a complex with ERLEC1, OS9, SEL1L and SYVN1. Interacts with DNAJC10. Interacts with DNAJB9/ERdj4; leading to recruit HSPA5/BiP to ERN1/IRE1. Interacts with ERN1/IRE1 (via luminal domain); the interaction takes place following interaction with DNAJB9/ERdj4 and leads to inactivate ERN1/IRE1, the interaction also competitively inhibits ERN1 interaction with MANF. Interacts directly with MANF (via SAP domain); the interaction inhibits ATP binding to HSPA5/BiP and subsequent nucleotide exchange. Interacts with EIF2AK3/PERK (via luminal domain); interaction leads to inactivate EIF2AK3/PERK. Interacts with MX1. Interacts with METTL23. Interacts with CEMIP; the interaction induces calcium leakage from the endoplasmic reticulum and cell migration. Interacts with PCSK4 form; the interaction takes place in the endoplasmic reticulum. Interacts with CIPC. Interacts with CCDC88B (via C-terminus); the interaction opposes ERN1-mediated JNK activation, protecting against apoptosis. Interacts with INPP5K; necessary for INPP5K localization at the endoplasmic reticulum. Interacts with MANF; the interaction is direct. Interacts with LOXL2; leading to activate the ERN1/IRE1-XBP1 pathway of the unfolded protein response. Interacts with CLU under stressed condition; interaction increases CLU protein stability; facilitates its retrotranslocation and redistribution to the mitochondria; cooperatively suppress stress-induced apoptosis by stabilizing mitochondrial membrane integrity. Interacts with CCDC47. Interacts with CLN3. Interacts with ELAPOR1; may regulate the function of HSPA5 in apoptosis and cell proliferation. Interacts with CASP7. Interacts with ILDR2; the interaction stabilizes ILDR2 expression. Interacts with ADAM7. In terms of processing, in unstressed cells, AMPylation at Thr-518 by FICD inactivates the chaperome activity: AMPylated form is locked in a relatively inert state and only weakly stimulated by J domain-containing proteins. In response to endoplasmic reticulum stress, de-AMPylation by the same protein, FICD, restores the chaperone activity.

Its subcellular location is the endoplasmic reticulum lumen. The protein resides in the melanosome. It is found in the cytoplasm. The protein localises to the cell surface. The catalysed reaction is ATP + H2O = ADP + phosphate + H(+). Its activity is regulated as follows. The chaperone activity is regulated by ATP-induced allosteric coupling of the nucleotide-binding (NBD) and substrate-binding (SBD) domains. In the ADP-bound and nucleotide-free (apo) states, the two domains have little interaction. In contrast, in the ATP-bound state the two domains are tightly coupled, which results in drastically accelerated kinetics in both binding and release of polypeptide substrates. J domain-containing co-chaperones (DNAJB9/ERdj4 or DNAJC10/ERdj5) stimulate the ATPase activity and are required for efficient substrate recognition by HSPA5/BiP. Homooligomerization inactivates participating HSPA5/BiP protomers and probably act as reservoirs to store HSPA5/BiP molecules when they are not needed by the cell. Functionally, endoplasmic reticulum chaperone that plays a key role in protein folding and quality control in the endoplasmic reticulum lumen. Involved in the correct folding of proteins and degradation of misfolded proteins via its interaction with DNAJC10/ERdj5, probably to facilitate the release of DNAJC10/ERdj5 from its substrate. Acts as a key repressor of the EIF2AK3/PERK and ERN1/IRE1-mediated unfolded protein response (UPR). In the unstressed endoplasmic reticulum, recruited by DNAJB9/ERdj4 to the luminal region of ERN1/IRE1, leading to disrupt the dimerization of ERN1/IRE1, thereby inactivating ERN1/IRE1. Also binds and inactivates EIF2AK3/PERK in unstressed cells. Accumulation of misfolded protein in the endoplasmic reticulum causes release of HSPA5/BiP from ERN1/IRE1 and EIF2AK3/PERK, allowing their homodimerization and subsequent activation. Plays an auxiliary role in post-translational transport of small presecretory proteins across endoplasmic reticulum (ER). May function as an allosteric modulator for SEC61 channel-forming translocon complex, likely cooperating with SEC62 to enable the productive insertion of these precursors into SEC61 channel. Appears to specifically regulate translocation of precursors having inhibitory residues in their mature region that weaken channel gating. May also play a role in apoptosis and cell proliferation. The chain is Endoplasmic reticulum chaperone BiP from Rattus norvegicus (Rat).